The chain runs to 478 residues: Cytochrome c-552 (478 aa).

A signal peptide spans 1–26 (MARKTLRARRFFSLIFPFFFITSVYA). H94 provides a ligand contact to heme c. Heme-binding residues include C122, C125, and K126. Heme c is bound by residues C160, C163, H164, C209, C212, and H213. Ca(2+)-binding residues include E215, Y216, K261, and Q263. Residue Y216 participates in substrate binding. H264 contributes to the substrate binding site. H275, C282, C285, H286, H301, C314, C317, H318, and H393 together coordinate heme c.

It belongs to the cytochrome c-552 family. Ca(2+) serves as cofactor. Heme c is required as a cofactor.

The protein resides in the periplasm. It carries out the reaction 6 Fe(III)-[cytochrome c] + NH4(+) + 2 H2O = 6 Fe(II)-[cytochrome c] + nitrite + 8 H(+). It participates in nitrogen metabolism; nitrate reduction (assimilation). Catalyzes the reduction of nitrite to ammonia, consuming six electrons in the process. In Salmonella paratyphi A (strain ATCC 9150 / SARB42), this protein is Cytochrome c-552.